A 497-amino-acid polypeptide reads, in one-letter code: Probable malate:quinone oxidoreductase (497 aa).

The protein belongs to the MQO family. Requires FAD as cofactor.

It carries out the reaction (S)-malate + a quinone = a quinol + oxaloacetate. It participates in carbohydrate metabolism; tricarboxylic acid cycle; oxaloacetate from (S)-malate (quinone route): step 1/1. The sequence is that of Probable malate:quinone oxidoreductase from Tolumonas auensis (strain DSM 9187 / NBRC 110442 / TA 4).